An 874-amino-acid polypeptide reads, in one-letter code: AP-1 complex subunit gamma-1 (874 aa).

Positions 761–873 constitute a GAE domain; sequence TVAKSHTVYT…QDQTDWAQPS (113 aa).

The protein belongs to the adaptor complexes large subunit family. In terms of assembly, adaptor protein complex 1 (AP-1) is a heterotetramer composed of two large adaptins (gamma-type subunit APL4 and beta-type subunit APL2), a medium adaptin (mu-type subunit APM1) and a small adaptin (sigma-type subunit APS1). AP-1 interacts with clathrin.

The protein resides in the cytoplasmic vesicle. It localises to the clathrin-coated vesicle membrane. The protein localises to the golgi apparatus. Adaptins are components of the adaptor complexes which link clathrin to receptors in coated vesicles. Clathrin-associated protein complexes are believed to interact with the cytoplasmic tails of membrane proteins, leading to their selection and concentration. The AP-1 complex interacts directly with clathrin. Required for apical growth extension. The protein is AP-1 complex subunit gamma-1 (APL4) of Mycosarcoma maydis (Corn smut fungus).